Reading from the N-terminus, the 146-residue chain is Small ribosomal subunit protein bS6 (146 aa).

Positions 100–146 (QSAMMRKRDDDDRGDRPDRGDRGRGPRPDRPPRRPRDDAAASDEGGF) are disordered. Over residues 105–138 (RKRDDDDRGDRPDRGDRGRGPRPDRPPRRPRDDA) the composition is skewed to basic and acidic residues.

This sequence belongs to the bacterial ribosomal protein bS6 family.

Binds together with bS18 to 16S ribosomal RNA. The sequence is that of Small ribosomal subunit protein bS6 from Methylocella silvestris (strain DSM 15510 / CIP 108128 / LMG 27833 / NCIMB 13906 / BL2).